A 125-amino-acid chain; its full sequence is Salivary protein 15 Ipac-1 (125 aa).

Positions 1-15 (MKVVCIILLFGIAAA) are cleaved as a signal peptide. Asn82 and Asn94 each carry an N-linked (GlcNAc...) asparagine glycan. A CD4-binding region spans residues 106–125 (GPSGQTCADKSKCVGHIPGC).

The protein belongs to the salp15 family. Interacts with host CD4. Interacts with host DC-SIGN (CD209). Interacts with Borrelia outer surface protein C (OspC). In terms of tissue distribution, expressed in salivary glands.

It localises to the secreted. Functionally, salivary tick protein that downregulates host immune system by binding to both dendritic cells, and CD4(+) T cells. Specifically binds to the CD4 coreceptor on T cells. This interaction prevents the activation of the Src kinase, Lck, and its downstream substrate Zap-70, and results in deficient activation of PLCgamma1, the repression of calcium fluxes triggered by T-cell antigen receptor (TCR) ligation, and a subsequent reduction in interleukin-2 production. This salivary protein also binds to DC-SIGN (CD209) on dendritic cells (DC) and activates the Raf-1 kinase/MEK signaling pathway that results in down-regulating expression of pro-inflammatory cytokines. Furthermore, it inhibits T cell proliferation induced by DCs. It also inhibits in vitro keratinocyte inflammation induced by Borrelia burgdorferi or by the major outer surface protein (OspC) of Borrelia. In addition, it downregulates chemokines and monocyte chemoattractant protein 1, as well as several antimicrobial peptides such as defensins, cathelicidin, psoriasin, and RNase 7. Apart from its immunomodulatory activities, it is also associated with protection of Borrelia spirochetes from antibody-mediated killing through its binding to OspC. In vivo, tests on different immune disease animal models show promising therapeutic results, e.g., in inhibiting HIV infection, experimental autoimmune encephalomyelitis, transplantation rejection, and asthma. In Ixodes pacificus (Western black-legged tick), this protein is Salivary protein 15 Ipac-1.